Reading from the N-terminus, the 250-residue chain is Probable 2' cyclic ADP-D-ribose synthase TcpB (250 aa).

The segment at 1-46 (MSKEKQAQSKAHKAQQAISSAKSLSTQKSKMSELERATRDGAAIGK) is disordered. The segment covering 14–23 (AQQAISSAKS) has biased composition (low complexity). Basic and acidic residues predominate over residues 30–39 (KMSELERATR). Residues 117 to 250 (EEYDFFISHA…EIAKELHSLI (134 aa)) enclose the TIR domain. Residue glutamate 192 is part of the active site.

In terms of assembly, homodimer. Interacts with host TIRAP. Interacts with host TLR4, abolishes the interaction of host TIRAP with TLR4.

It is found in the secreted. The protein resides in the host cell membrane. The catalysed reaction is NAD(+) + H2O = ADP-D-ribose + nicotinamide + H(+). The enzyme catalyses NAD(+) = 2'cADPR + nicotinamide + H(+). In terms of biological role, virulence factor that interferes with host Toll-like receptor 2 (TLR2) signaling, resulting in the reduction of dendritic cell maturation, inhibition of pro-inflammatory cytokine secretion and impaired NF-kappa-B activation in macrophages. Also acts on host TLR4. Binds host lipids. Has NAD(+) hydrolase (NADase) activity, catalyzes cleavage of NAD(+) into ADP-D-ribose (ADPR) and nicotinamide, also generates a cyclization variant of cyclic ADPR (cADPR), termed v-cADPR (probably 2'cADPR). The protein is Probable 2' cyclic ADP-D-ribose synthase TcpB of Brucella abortus (strain 2308).